Here is a 500-residue protein sequence, read N- to C-terminus: Cytochrome P450 71D13 (500 aa).

The helical; Signal-anchor for type II membrane protein transmembrane segment at 3–23 threads the bilayer; that stretch reads LQISSAIIILVVTYTISLLII. Residue cysteine 439 participates in heme binding.

The protein belongs to the cytochrome P450 family. Heme is required as a cofactor.

It is found in the endoplasmic reticulum membrane. It catalyses the reaction (4S)-limonene + reduced [NADPH--hemoprotein reductase] + O2 = (1S,6R)-isopiperitenol + oxidized [NADPH--hemoprotein reductase] + H2O + H(+). In terms of biological role, hydroxylates (-)-(4S)-limonene to (-)-trans-isopiperitenol, a precursor of (-)-menthol, responsible for the cooling sensation of peppermint. This is Cytochrome P450 71D13 (CYP71D13) from Mentha piperita (Peppermint).